The following is a 230-amino-acid chain: 3-dehydroquinate dehydratase (230 aa).

Residues S26, E51–R53, and R84 contribute to the 3-dehydroquinate site. H127 acts as the Proton donor/acceptor in catalysis. The active-site Schiff-base intermediate with substrate is the K150. 3-dehydroquinate contacts are provided by R190, T209, and Q213.

It belongs to the type-I 3-dehydroquinase family. In terms of assembly, homodimer.

It catalyses the reaction 3-dehydroquinate = 3-dehydroshikimate + H2O. It functions in the pathway metabolic intermediate biosynthesis; chorismate biosynthesis; chorismate from D-erythrose 4-phosphate and phosphoenolpyruvate: step 3/7. Involved in the third step of the chorismate pathway, which leads to the biosynthesis of aromatic amino acids. Catalyzes the cis-dehydration of 3-dehydroquinate (DHQ) and introduces the first double bond of the aromatic ring to yield 3-dehydroshikimate. This is 3-dehydroquinate dehydratase from Thermoplasma volcanium (strain ATCC 51530 / DSM 4299 / JCM 9571 / NBRC 15438 / GSS1).